The chain runs to 642 residues: Threonine--tRNA ligase (642 aa).

A TGS domain is found at 1 to 61 (MPVITLPDGS…DTDSELSIIT (61 aa)). A catalytic region spans residues 243-534 (DHRKIGKQLD…LIEEYAGKFP (292 aa)). Zn(2+) contacts are provided by cysteine 334, histidine 385, and histidine 511.

The protein belongs to the class-II aminoacyl-tRNA synthetase family. In terms of assembly, homodimer. Zn(2+) serves as cofactor.

It localises to the cytoplasm. It carries out the reaction tRNA(Thr) + L-threonine + ATP = L-threonyl-tRNA(Thr) + AMP + diphosphate + H(+). In terms of biological role, catalyzes the attachment of threonine to tRNA(Thr) in a two-step reaction: L-threonine is first activated by ATP to form Thr-AMP and then transferred to the acceptor end of tRNA(Thr). Also edits incorrectly charged L-seryl-tRNA(Thr). The polypeptide is Threonine--tRNA ligase (Shewanella piezotolerans (strain WP3 / JCM 13877)).